The primary structure comprises 319 residues: Acetyl esterase (319 aa).

The short motif at 91 to 93 (HGG) is the Involved in the stabilization of the negatively charged intermediate by the formation of the oxyanion hole element. Residues Ser-165, Asp-262, and His-292 contribute to the active site.

The protein belongs to the 'GDXG' lipolytic enzyme family. As to quaternary structure, homodimer. Interacts with MalT and MelA.

The protein resides in the cytoplasm. Displays esterase activity towards short chain fatty esters (acyl chain length of up to 8 carbons). Able to hydrolyze triacetylglycerol (triacetin) and tributyrylglycerol (tributyrin), but not trioleylglycerol (triolein) or cholesterol oleate. Negatively regulates MalT activity by antagonizing maltotriose binding. Inhibits MelA galactosidase activity. The protein is Acetyl esterase of Escherichia coli O9:H4 (strain HS).